We begin with the raw amino-acid sequence, 303 residues long: ASC1-like protein (303 aa).

6 helical membrane-spanning segments follow: residues 19–39, 81–101, 127–147, 153–173, 212–232, and 255–275; these read YEDFAVLPLFALFFPSVRFLL, CIYFLSAEVFALVVTYNEPWF, ALYMYTGGFYTYSIFALIFWE, FGVSMSHHVATAILIVLSYNI, YLCLSWIILRLIYYPFWVLWS, and YIFNSLLFCLLVLHIYWWVLI. The 213-residue stretch at 72-284 folds into the TLC domain; sequence RKFKESAWKC…IYRMLVKQIQ (213 aa).

Its subcellular location is the endoplasmic reticulum membrane. Functionally, mediates resistance to sphinganine-analog mycotoxins (SAMs) by restoring the sphingolipid biosynthesis. Could salvage the transport of GPI-anchored proteins from the endoplasmic reticulum to the Golgi apparatus in ceramides-depleted cells after SAM exposure. This is ASC1-like protein from Solanum lycopersicum (Tomato).